The chain runs to 308 residues: Glutaminase (308 aa).

The substrate site is built by Ser-66, Asn-117, Glu-161, Asn-168, Tyr-192, Tyr-244, and Val-262.

This sequence belongs to the glutaminase family. In terms of assembly, homotetramer.

The catalysed reaction is L-glutamine + H2O = L-glutamate + NH4(+). In Salmonella arizonae (strain ATCC BAA-731 / CDC346-86 / RSK2980), this protein is Glutaminase.